The following is a 410-amino-acid chain: Sensor histidine kinase GlnK (410 aa).

Residues 1 to 15 (MLITVPLAGELKFYP) are Extracellular-facing. The chain crosses the membrane as a helical span at residues 16 to 36 (LNEEFRVSFGAPVFFFFLSLL). Residues 37 to 38 (RH) are Cytoplasmic-facing. A helical membrane pass occupies residues 39-59 (VPAVLPGFLTGAAVFIFRVFL). Over 60 to 71 (ELWGGGHNGLTP) the chain is Extracellular. A helical membrane pass occupies residues 72–92 (ILYDQASGFFFYMTYACLFSI). Over 93-102 (LKANRFRERP) the chain is Cytoplasmic. Residues 103–123 (IMLGFIGFMIEVVSDCVELTV) form a helical membrane-spanning segment. Residues 124 to 139 (QFLIFHTVVTPEKITD) lie on the Extracellular side of the membrane. A helical membrane pass occupies residues 140-160 (IAVIAISHTFIVMSFYSVLKL). The Cytoplasmic portion of the chain corresponds to 161–410 (YETQSREKQT…LPVRHLIQKG (250 aa)). One can recognise a Histidine kinase domain in the interval 189 to 405 (VHLKKTLKTT…VFAIRLPVRH (217 aa)). Position 190 is a phosphohistidine; by autocatalysis (histidine 190).

In terms of assembly, homotrimer. Under poor nitrogen source such as nitrate, the complex between GlnK and AmtB, which are the transmembrane ammonium transporter and its cognate regulator, respectively, interacts with TnrA. GlnK-ATP complex are not able to bind TnrA.

The protein resides in the cell membrane. It carries out the reaction ATP + protein L-histidine = ADP + protein N-phospho-L-histidine.. Its function is as follows. Member of the two-component regulatory system GlnK/GlnL that positively regulates the expression of the glsA-glnT operon in response to glutamine. It seems that autophosphorylated GlnK transfers a phosphoryl group to GlnL, which positively regulates the expression of the glsA-glnT operon. Interaction between GlnK-AmtB complex and TnrA protects TnrA from proteolytic degradation. The protein is Sensor histidine kinase GlnK of Bacillus subtilis (strain 168).